The primary structure comprises 318 residues: Adenylate isopentenyltransferase 4 (318 aa).

Residue 12–19 participates in ATP binding; the sequence is GATGSGKS.

Belongs to the IPP transferase family. The cofactor is Mg(2+). Expressed in immature seeds with highest expression in the chalazal endosperm.

Its subcellular location is the cytoplasm. The enzyme catalyses dimethylallyl diphosphate + ADP = N(6)-(dimethylallyl)adenosine 5'-diphosphate + diphosphate. It catalyses the reaction dimethylallyl diphosphate + ATP = N(6)-(dimethylallyl)adenosine 5'-triphosphate + diphosphate. Functionally, involved in cytokinin biosynthesis. Catalyzes the transfer of an isopentenyl group from dimethylallyl diphosphate (DMAPP) to ATP and ADP, but not to AMP. Has no DMAPP:tRNA isopentenyltransferase activity. This chain is Adenylate isopentenyltransferase 4 (IPT4), found in Arabidopsis thaliana (Mouse-ear cress).